Consider the following 294-residue polypeptide: Large ribosomal subunit protein uL4m (294 aa).

Positions 119–139 (EVSGGGRKPWQQKGSGRARHG) are disordered. The residue at position 147 (Arg-147) is an Omega-N-methylarginine.

This sequence belongs to the universal ribosomal protein uL4 family. In terms of assembly, component of the mitochondrial ribosome large subunit (39S) which comprises a 16S rRNA and about 50 distinct proteins. Interacts with MIEF1 upstream open reading frame protein.

The protein resides in the mitochondrion. This Mus musculus (Mouse) protein is Large ribosomal subunit protein uL4m (Mrpl4).